We begin with the raw amino-acid sequence, 240 residues long: tRNA pseudouridine synthase A (240 aa).

The Nucleophile role is filled by D50. Y109 lines the substrate pocket.

This sequence belongs to the tRNA pseudouridine synthase TruA family. Homodimer.

The enzyme catalyses uridine(38/39/40) in tRNA = pseudouridine(38/39/40) in tRNA. Its function is as follows. Formation of pseudouridine at positions 38, 39 and 40 in the anticodon stem and loop of transfer RNAs. The chain is tRNA pseudouridine synthase A from Campylobacter jejuni (strain RM1221).